The chain runs to 308 residues: Secreted frizzled-related protein 1 (308 aa).

The first 25 residues, Met1–Ala25, serve as a signal peptide directing secretion. An FZ domain is found at Thr47–Met163. 5 cysteine pairs are disulfide-bonded: Cys52-Cys115, Cys62-Cys108, Cys99-Cys134, Cys123-Cys160, and Cys127-Cys151. An N-linked (GlcNAc...) asparagine glycan is attached at Asn167. Intrachain disulfides connect Cys180–Cys250, Cys183–Cys252, and Cys197–Cys300. The NTR domain occupies Cys180–Cys300.

The protein belongs to the secreted frizzled-related protein (sFRP) family. As to quaternary structure, interacts with WNT1, WNT2, WNT4, WNT8, MYOC and FRZD6. In terms of tissue distribution, highest levels in aortic endothelium, heart, spleen and eye. Lower levels in lung, brain and kidney. Weak expression in liver, skeletal muscle and the medial layer of the aorta. In the cortical brain, localized to neurons and small blood vessels. In the retina, localized to the inner and outer nuclear layers with high expression in the neuronal cell bodies. In the heart, restricted to myocytes. In lung, highest expression found in the epithelium of terminal bronchioles. In kidney, localized to the epithelium of collecting ducts of the medulla and, in spleen, expression restricted to the red pulp in cells associated with the sinuses.

It localises to the secreted. Soluble frizzled-related proteins (sFRPS) function as modulators of Wnt signaling through direct interaction with Wnts. They have a role in regulating cell growth and differentiation in specific cell types. SFRP1 decreases intracellular beta-catenin levels. Has antiproliferative effects on vascular cells, in vitro and in vivo, and can induce, in vivo, an angiogenic response. In vascular cell cycle, delays the G1 phase and entry into the S phase. In kidney development, inhibits tubule formation and bud growth in metanephroi. Inhibits WNT1/WNT4-mediated TCF-dependent transcription. In Bos taurus (Bovine), this protein is Secreted frizzled-related protein 1 (SFRP1).